The chain runs to 215 residues: Probable GTP-binding protein EngB (215 aa).

An EngB-type G domain is found at 30–204 (TGIEVAFAGR…RQKLDTWFSE (175 aa)). GTP-binding positions include 38 to 45 (GRSNAGKS), 65 to 69 (GRTQL), 83 to 86 (DLPG), 150 to 153 (TKAD), and 183 to 185 (FSS). The Mg(2+) site is built by S45 and T67.

Belongs to the TRAFAC class TrmE-Era-EngA-EngB-Septin-like GTPase superfamily. EngB GTPase family. Mg(2+) is required as a cofactor.

Necessary for normal cell division and for the maintenance of normal septation. This Escherichia coli O1:K1 / APEC protein is Probable GTP-binding protein EngB.